Here is a 369-residue protein sequence, read N- to C-terminus: MSGNTLGTLFTVTTFGESHGPAIGCVIDGCPPGMALTEADVQLELDRRKPGTSRHVTQRQEPDQVEILSGVFEGVTTGAPIALLIRNTDQRSKDYGNIAETFRPGHADYTYWQKYGVRDYRGGGRSSARLTAPVVGAGAIAKKWLRERFGVEVRGYMSALGEIEIPFVDWSHVRENPFFAPNADIVPQLEDYMDALRKDGDSIGARIDVVASGVPVGWGEPLFDRLDADIAHAMMGINAVKGVEIGAGFASVAQRGSVHGDELTPDGFVGNHAGGVLGGISTGQDITVSIAIKPTSSIRTPRRSITRAGEPAVVETFGRHDPCVGIRATPIAESMLALVLIDHALRHRAQCGDVSSATPRIAARAPDAQ.

Residues Arg48 and Arg54 each coordinate NADP(+). FMN is bound by residues 125–127 (RSS), 238–239 (NA), Gly278, 293–297 (KPTSS), and Arg319.

It belongs to the chorismate synthase family. In terms of assembly, homotetramer. It depends on FMNH2 as a cofactor.

It catalyses the reaction 5-O-(1-carboxyvinyl)-3-phosphoshikimate = chorismate + phosphate. The protein operates within metabolic intermediate biosynthesis; chorismate biosynthesis; chorismate from D-erythrose 4-phosphate and phosphoenolpyruvate: step 7/7. Catalyzes the anti-1,4-elimination of the C-3 phosphate and the C-6 proR hydrogen from 5-enolpyruvylshikimate-3-phosphate (EPSP) to yield chorismate, which is the branch point compound that serves as the starting substrate for the three terminal pathways of aromatic amino acid biosynthesis. This reaction introduces a second double bond into the aromatic ring system. The polypeptide is Chorismate synthase (Burkholderia mallei (strain ATCC 23344)).